We begin with the raw amino-acid sequence, 423 residues long: MAVDLLLGLQWGDEGKGKIVDVLTSKYDIIARFQGGPNAGHTLEFDGQKHVLHTIPSGIFHDDSINLVGNGVVIDPVIFKRELDNLAKHKIDYKSKLVISRKAHLILPTHRLLDAASEASKGKAKIGSTLKGIGPTYMDKTGRNGLRVGDLELEDWKDRYRALADKHEKMIAFYDVDVQYDLKELEKEFCTAVDTLKELTFIDSEEYLHQAMKSGKSILAEGAQGSLLDIDFGTYPFVTSSNTTAAGACTGLGVAPREIGEAFGIFKAYTTRVGSGPFPTELFDEVGERMGKVGNEFGATTGRKRRCGWLDLVALKYAVQVNGITQLIMMKGDVLSGFDTLKVCTAYKYKGKEITHLPFNIESGNIEPVYTEVKGWEEDLTKMTDASSLPKEFNEYVDFLEKELETPITIVSVGPDRKQTITR.

GTP is bound by residues 12-18 (GDEGKGK) and 40-42 (GHT). Aspartate 13 serves as the catalytic Proton acceptor. The Mg(2+) site is built by aspartate 13 and glycine 40. IMP contacts are provided by residues 13–16 (DEGK), 38–41 (NAGH), threonine 129, arginine 143, glutamine 224, threonine 239, and arginine 303. Histidine 41 acts as the Proton donor in catalysis. 299–305 (ATTGRKR) lines the substrate pocket. GTP-binding positions include arginine 305, 331–333 (KGD), and 412–414 (SVG).

Belongs to the adenylosuccinate synthetase family. As to quaternary structure, homodimer. It depends on Mg(2+) as a cofactor.

Its subcellular location is the cytoplasm. The enzyme catalyses IMP + L-aspartate + GTP = N(6)-(1,2-dicarboxyethyl)-AMP + GDP + phosphate + 2 H(+). Its pathway is purine metabolism; AMP biosynthesis via de novo pathway; AMP from IMP: step 1/2. Plays an important role in the de novo pathway of purine nucleotide biosynthesis. Catalyzes the first committed step in the biosynthesis of AMP from IMP. This is Adenylosuccinate synthetase from Christiangramia forsetii (strain DSM 17595 / CGMCC 1.15422 / KT0803) (Gramella forsetii).